The chain runs to 336 residues: Probable tRNA N6-adenosine threonylcarbamoyltransferase (336 aa).

A divalent metal cation contacts are provided by His-110, His-114, and Tyr-131. Substrate-binding positions include 131–135 (YVSGG), Asp-163, Gly-178, Glu-182, and Asn-267. Residue Asp-295 participates in a divalent metal cation binding.

Belongs to the KAE1 / TsaD family. As to quaternary structure, component of the EKC/KEOPS complex; the whole complex dimerizes. The cofactor is a divalent metal cation.

The protein localises to the cytoplasm. It localises to the nucleus. The catalysed reaction is L-threonylcarbamoyladenylate + adenosine(37) in tRNA = N(6)-L-threonylcarbamoyladenosine(37) in tRNA + AMP + H(+). Its function is as follows. Component of the EKC/KEOPS complex that is required for the formation of a threonylcarbamoyl group on adenosine at position 37 (t(6)A37) in tRNAs that read codons beginning with adenine. The complex is probably involved in the transfer of the threonylcarbamoyl moiety of threonylcarbamoyl-AMP (TC-AMP) to the N6 group of A37. Osgep likely plays a direct catalytic role in this reaction, but requires other protein(s) of the complex to fulfill this activity. The chain is Probable tRNA N6-adenosine threonylcarbamoyltransferase from Dictyostelium discoideum (Social amoeba).